A 200-amino-acid chain; its full sequence is MKKKGIFGGTFDPIHNGHLHIAYEALYKLNLDRVIFIPSGNPPHKTDKVITDANIRYKLVKDVIQNEEKFEVSDYELKNQGLSYTYKTLKHFNEKHKDTEWYFITGADCLMQLDSWKNINEVLSLCNFVVFRRSGYSMEDMLKQKERIEKKFNKKIIFLDIPVIDISSTTIRNKIKNRENISYLVPEKARCMVNKMNLYK.

The protein belongs to the NadD family.

The enzyme catalyses nicotinate beta-D-ribonucleotide + ATP + H(+) = deamido-NAD(+) + diphosphate. The protein operates within cofactor biosynthesis; NAD(+) biosynthesis; deamido-NAD(+) from nicotinate D-ribonucleotide: step 1/1. Functionally, catalyzes the reversible adenylation of nicotinate mononucleotide (NaMN) to nicotinic acid adenine dinucleotide (NaAD). The protein is Probable nicotinate-nucleotide adenylyltransferase of Clostridium novyi (strain NT).